Consider the following 473-residue polypeptide: Cysteine--tRNA ligase (473 aa).

Zn(2+) is bound at residue cysteine 27. The 'HIGH' region motif lies at 29–39 (ITPYDHMHVGH). Residues cysteine 213, histidine 238, and glutamate 242 each coordinate Zn(2+). The short motif at 271-275 (KMSKS) is the 'KMSKS' region element. Lysine 274 is a binding site for ATP.

It belongs to the class-I aminoacyl-tRNA synthetase family. The cofactor is Zn(2+).

The protein resides in the cytoplasm. The enzyme catalyses tRNA(Cys) + L-cysteine + ATP = L-cysteinyl-tRNA(Cys) + AMP + diphosphate. This Pyrobaculum islandicum (strain DSM 4184 / JCM 9189 / GEO3) protein is Cysteine--tRNA ligase.